The chain runs to 438 residues: Enolase (438 aa).

Residue Gln-174 coordinates (2R)-2-phosphoglycerate. Catalysis depends on Glu-216, which acts as the Proton donor. 3 residues coordinate Mg(2+): Asp-253, Glu-297, and Asp-324. Positions 349, 378, 379, and 400 each coordinate (2R)-2-phosphoglycerate. The Proton acceptor role is filled by Lys-349.

This sequence belongs to the enolase family. As to quaternary structure, component of the RNA degradosome, a multiprotein complex involved in RNA processing and mRNA degradation. Requires Mg(2+) as cofactor.

It localises to the cytoplasm. The protein localises to the secreted. The protein resides in the cell surface. The catalysed reaction is (2R)-2-phosphoglycerate = phosphoenolpyruvate + H2O. It participates in carbohydrate degradation; glycolysis; pyruvate from D-glyceraldehyde 3-phosphate: step 4/5. In terms of biological role, catalyzes the reversible conversion of 2-phosphoglycerate (2-PG) into phosphoenolpyruvate (PEP). It is essential for the degradation of carbohydrates via glycolysis. The sequence is that of Enolase from Psychrobacter sp. (strain PRwf-1).